The sequence spans 498 residues: Putative BTB/POZ domain-containing protein L788 (498 aa).

In terms of domain architecture, BTB spans 28 to 99 (TDIILVLEDD…FYGQKIKSGN (72 aa)).

Belongs to the mimivirus BTB/WD family.

This chain is Putative BTB/POZ domain-containing protein L788, found in Acanthamoeba polyphaga (Amoeba).